We begin with the raw amino-acid sequence, 310 residues long: uncharacterized protein (310 aa).

This is an uncharacterized protein from Acanthamoeba polyphaga (Amoeba).